Consider the following 200-residue polypeptide: Probable GTP-binding protein EngB (200 aa).

One can recognise an EngB-type G domain in the interval 22-197 (DLPEIAFAGR…WQAIQDAVEE (176 aa)). GTP is bound by residues 30–37 (GRSNVGKS), 57–61 (GRTQL), 78–81 (DLPG), 145–148 (TKCD), and 176–178 (FSA). Mg(2+) contacts are provided by Ser37 and Thr59.

The protein belongs to the TRAFAC class TrmE-Era-EngA-EngB-Septin-like GTPase superfamily. EngB GTPase family. The cofactor is Mg(2+).

Functionally, necessary for normal cell division and for the maintenance of normal septation. In Trichlorobacter lovleyi (strain ATCC BAA-1151 / DSM 17278 / SZ) (Geobacter lovleyi), this protein is Probable GTP-binding protein EngB.